The following is a 270-amino-acid chain: Sugar phosphatase YidA (270 aa).

Residue Asp-9 is the Nucleophile of the active site. Asp-9 is a Mg(2+) binding site. A phosphate-binding site is contributed by Met-10. Residue Asp-11 participates in Mg(2+) binding. Residues 43–44 and Lys-197 contribute to the phosphate site; that span reads TG. Asp-220 contacts Mg(2+). Asn-223 contributes to the phosphate binding site.

The protein belongs to the HAD-like hydrolase superfamily. Cof family. Homodimer. Mg(2+) serves as cofactor.

The enzyme catalyses sugar phosphate + H2O = sugar + phosphate.. Functionally, catalyzes the dephosphorylation of different sugar phosphates. The chain is Sugar phosphatase YidA (yidA) from Escherichia coli O6:H1 (strain CFT073 / ATCC 700928 / UPEC).